The following is a 225-amino-acid chain: Cytidylate kinase (225 aa).

Position 12–20 (12–20 (GPSGAGKGT)) interacts with ATP.

This sequence belongs to the cytidylate kinase family. Type 1 subfamily.

The protein resides in the cytoplasm. The enzyme catalyses CMP + ATP = CDP + ADP. It catalyses the reaction dCMP + ATP = dCDP + ADP. The protein is Cytidylate kinase of Stenotrophomonas maltophilia (strain R551-3).